A 427-amino-acid polypeptide reads, in one-letter code: Mannosylglucosylglycerate synthase (427 aa).

This sequence belongs to the glycosyltransferase group 1 family. Co(2+) is required as a cofactor. It depends on Mg(2+) as a cofactor. Requires Mn(2+) as cofactor. The cofactor is Ni(2+).

It catalyses the reaction (2R)-2-O-(alpha-D-glucopyranosyl)-glycerate + GDP-alpha-D-mannose = (2R)-2-O-[alpha-D-mannopyranosyl-(1-&gt;2)-alpha-D-glucopyranosyl]-glycerate + GDP + H(+). Functionally, catalyzes the synthesis of mannosylglucosylglycerate (MGG) from glucosylglycerate (GG) and GDP-mannose. The sequence is that of Mannosylglucosylglycerate synthase from Thermotoga maritima (strain ATCC 43589 / DSM 3109 / JCM 10099 / NBRC 100826 / MSB8).